The following is a 240-amino-acid chain: Protein unc-119 homolog A (240 aa).

A compositionally biased stretch (gly residues) spans 1–11; the sequence is MKVKKGGGGAG. A required for midbody localization region spans residues 1–59; that stretch reads MKVKKGGGGAGTATESAPGPSGQSVAPIPQPPAESESGSESEPDAGPGPRPGPLQRKQP. The disordered stretch occupies residues 1–61; that stretch reads MKVKKGGGGA…GPLQRKQPIG (61 aa). 3 positions are modified to phosphoserine; by CK2: Ser-37, Ser-39, and Ser-41. The segment at 121–240 is required for centrosome localization; the sequence is LDPNAGRFVR…KADYSYSGTP (120 aa). Tyr-131 is a tetradecanoate binding site.

It belongs to the PDE6D/unc-119 family. Interacts with CABP4; in the absence of calcium. Interacts with DNM1; leading to a decrease of DNM1 GTPase activity. May interact with GTP-bound ARL1. Interacts with ARL2 and ARL3 (GTP-bound forms); this promotes the release of myyristoylated cargo proteins. Found in a complex with ARL3, RP2 and UNC119; RP2 induces hydrolysis of GTP ARL3 in the complex, leading to the release of UNC119. Interacts with NPHP3 (when myristoylated). Interacts with CYS1 (when myristoylated). Interacts with MACIR; interaction only takes place when UNC119 is not liganded with myristoylated proteins. Interacts with LCK; this interaction plays a crucial role in activation of LCK. Interacts with FYN. Interacts with RAB11A; in a cell cycle-dependent manner. Interacts with LYN (via SH2 and SH3 domains); leading to LYN activation. Found in a complex with ABL1, ABL2, CRK and UNC119; leading to the inhibition of CRK phosphorylation by ABL kinases. Interacts with CD44; leading to Shigella invasion. Interacts with KLHL18 (via kelch repeats). Interacts with PPP3CA, PPP3CB and PPP3CC. Interacts with USP48; this interaction promotes UNC119 stability. Post-translationally, phosphorylation suppresses its interaction with KLHL18 and down-regulates its KLHL18-mediated degradation. Phosphorylated more under light conditions than dark conditions. Dephosphorylated by calcineurin. In terms of tissue distribution, abundantly expressed in retina, in photoreceptor synapses and inner segments. Expressed in a much lesser extent in several other tissues.

The protein resides in the cytoplasm. The protein localises to the cytoskeleton. It localises to the microtubule organizing center. It is found in the centrosome. Its subcellular location is the spindle pole. The protein resides in the spindle. In terms of biological role, involved in synaptic functions in photoreceptor cells, the signal transduction in immune cells as a Src family kinase activator, endosome recycling, the uptake of bacteria and endocytosis, protein trafficking in sensory neurons and as lipid-binding chaperone with specificity for a diverse subset of myristoylated proteins. Specifically binds the myristoyl moiety of a subset of N-terminally myristoylated proteins and is required for their localization. Binds myristoylated GNAT1 and is required for G-protein localization and trafficking in sensory neurons. Probably plays a role in trafficking proteins in photoreceptor cells. Plays important roles in mediating Src family kinase signals for the completion of cytokinesis via RAB11A. The sequence is that of Protein unc-119 homolog A (UNC119) from Homo sapiens (Human).